We begin with the raw amino-acid sequence, 451 residues long: Secreted RxLR effector protein 70 (451 aa).

The first 17 residues, 1-17 (MRGAYYIITALLVVASS), serve as a signal peptide directing secretion. The RxLR-dEER motif lies at 48 to 65 (RFLRESRDVHDDLANEER). The interval 303–336 (DAPSNSKHTLGGNKDSSSATTLHKHSKGLSSRPF) is disordered. Residues 305-323 (PSNSKHTLGGNKDSSSATT) show a composition bias toward polar residues.

It belongs to the RxLR effector family.

It localises to the secreted. The protein resides in the host nucleus. In terms of biological role, secreted effector that completely suppresses the host cell death induced by cell death-inducing proteins. The polypeptide is Secreted RxLR effector protein 70 (Plasmopara viticola (Downy mildew of grapevine)).